Here is a 452-residue protein sequence, read N- to C-terminus: Probable 1,4-beta-D-glucan cellobiohydrolase A (452 aa).

The N-terminal stretch at 1 to 17 is a signal peptide; the sequence is MHQRALLFSALAVAANA. Asparagine 81 carries N-linked (GlcNAc...) asparagine glycosylation. Glutamate 226 functions as the Nucleophile in the catalytic mechanism. Glutamate 231 functions as the Proton donor in the catalytic mechanism. N-linked (GlcNAc...) asparagine glycosylation occurs at asparagine 284. A disordered region spans residues 406-432; it reads DPSKPGVARGTCEHGAGDPEKVESQHP. Over residues 416–431 the composition is skewed to basic and acidic residues; it reads TCEHGAGDPEKVESQH.

Belongs to the glycosyl hydrolase 7 (cellulase C) family.

It is found in the secreted. The catalysed reaction is Hydrolysis of (1-&gt;4)-beta-D-glucosidic linkages in cellulose and cellotetraose, releasing cellobiose from the non-reducing ends of the chains.. Functionally, the biological conversion of cellulose to glucose generally requires three types of hydrolytic enzymes: (1) Endoglucanases which cut internal beta-1,4-glucosidic bonds; (2) Exocellobiohydrolases that cut the disaccharide cellobiose from the non-reducing end of the cellulose polymer chain; (3) Beta-1,4-glucosidases which hydrolyze the cellobiose and other short cello-oligosaccharides to glucose. The polypeptide is Probable 1,4-beta-D-glucan cellobiohydrolase A (cbhA) (Neosartorya fischeri (strain ATCC 1020 / DSM 3700 / CBS 544.65 / FGSC A1164 / JCM 1740 / NRRL 181 / WB 181) (Aspergillus fischerianus)).